The following is a 562-amino-acid chain: Terpene synthase 2 (562 aa).

Mg(2+) is bound by residues Asp315, Asp319, Asp459, and Glu467. The DDXXD motif motif lies at 315 to 319; sequence DDEYD.

This sequence belongs to the terpene synthase family. Tpsa subfamily. Mg(2+) serves as cofactor. Mn(2+) is required as a cofactor. Expressed at low levels in stems, leaves, roots and fruits.

The catalysed reaction is (2E,6E)-farnesyl diphosphate = delta-cadinene + diphosphate. It carries out the reaction (2E,6E)-farnesyl diphosphate = alpha-cadinene + diphosphate. It catalyses the reaction (2E,6E)-farnesyl diphosphate + H2O = (-)-delta-cadinol + diphosphate. It participates in secondary metabolite biosynthesis; terpenoid biosynthesis. Its function is as follows. Sesquiterpene synthase involved in the biosynthesis of volatile compounds that contribute to the characteristic flavors of black pepper. Mediates the conversion of (2E,6E)-farnesyl diphosphate (FPP) into alpha-cadinene, delta-cadinene and delta-cadinol. The protein is Terpene synthase 2 of Piper nigrum (Black pepper).